A 546-amino-acid chain; its full sequence is Probable zinc metalloprotease EGY2, chloroplastic (546 aa).

A chloroplast-targeting transit peptide spans 1 to 64 (MQLPAMSCSP…QIRNRRFVCQ (64 aa)). Residues 67–143 (TETEPDGDGN…DATPASDAQE (77 aa)) form a disordered region. Over residues 69-86 (TEPDGDGNGDEEKEELGD) the composition is skewed to acidic residues. 2 stretches are compositionally biased toward polar residues: residues 89–110 (SSPS…TNAD) and 118–130 (NTEP…TVQN). 7 helical membrane-spanning segments follow: residues 257-277 (AVPE…TLLL), 301-321 (VYGA…HILA), 326-346 (GIKL…FGAI), 364-384 (AAGP…GFIL), 427-447 (PLVL…IPAG), 474-494 (LLGI…LIFF), and 514-534 (YISI…PYPF).

The protein belongs to the peptidase M50B family.

The protein resides in the plastid. It localises to the chloroplast membrane. Probable membrane-associated metalloprotease that may be involved in chloroplast development. The sequence is that of Probable zinc metalloprotease EGY2, chloroplastic (EGY2) from Oryza sativa subsp. japonica (Rice).